Here is a 719-residue protein sequence, read N- to C-terminus: Polyribonucleotide nucleotidyltransferase (719 aa).

2 residues coordinate Mg(2+): aspartate 495 and aspartate 501. The KH domain occupies 562-621; that stretch reads PRRLSFRIDPELIGTVIGPGGRTIKGITERTNTKIDIEDTGIVTVASHDGAAAEEAQKII. In terms of domain architecture, S1 motif spans 631–699; sequence GEYFDGKVTR…NRGRINLTLR (69 aa). The segment at 699–719 is disordered; that stretch reads RGVPQDGSDPQPTVILPIGES.

It belongs to the polyribonucleotide nucleotidyltransferase family. Requires Mg(2+) as cofactor.

It localises to the cytoplasm. The catalysed reaction is RNA(n+1) + phosphate = RNA(n) + a ribonucleoside 5'-diphosphate. Its function is as follows. Involved in mRNA degradation. Catalyzes the phosphorolysis of single-stranded polyribonucleotides processively in the 3'- to 5'-direction. The sequence is that of Polyribonucleotide nucleotidyltransferase from Synechococcus sp. (strain RCC307).